A 263-amino-acid chain; its full sequence is Large ribosomal subunit protein uL10m (263 aa).

The transit peptide at Met-1–His-29 directs the protein to the mitochondrion. A disordered region spans residues Gln-241 to Ser-263.

It belongs to the universal ribosomal protein uL10 family. As to quaternary structure, component of the mitochondrial ribosome large subunit (39S) which comprises a 16S rRNA and about 50 distinct proteins.

The protein localises to the mitochondrion. In Rattus norvegicus (Rat), this protein is Large ribosomal subunit protein uL10m (Mrpl10).